The primary structure comprises 420 residues: ATP phosphoribosyltransferase regulatory subunit (420 aa).

The protein belongs to the class-II aminoacyl-tRNA synthetase family. HisZ subfamily. Heteromultimer composed of HisG and HisZ subunits.

The protein resides in the cytoplasm. It participates in amino-acid biosynthesis; L-histidine biosynthesis; L-histidine from 5-phospho-alpha-D-ribose 1-diphosphate: step 1/9. Its function is as follows. Required for the first step of histidine biosynthesis. May allow the feedback regulation of ATP phosphoribosyltransferase activity by histidine. The sequence is that of ATP phosphoribosyltransferase regulatory subunit from Bacillus cereus (strain B4264).